A 369-amino-acid polypeptide reads, in one-letter code: Peptide chain release factor 2 (369 aa).

Gln250 carries the post-translational modification N5-methylglutamine.

It belongs to the prokaryotic/mitochondrial release factor family. Post-translationally, methylated by PrmC. Methylation increases the termination efficiency of RF2.

It is found in the cytoplasm. Its function is as follows. Peptide chain release factor 2 directs the termination of translation in response to the peptide chain termination codons UGA and UAA. The polypeptide is Peptide chain release factor 2 (prfB) (Rickettsia prowazekii (strain Madrid E)).